The chain runs to 85 residues: Antifungal protein (85 aa).

An N-terminal signal peptide occupies residues Met1–Gly18. 2 repeat units span residues Gln19–Gln25 and Gln67–Gln73. Residues Gln19–Gln73 are 2 X 7 AA repeats of Q-H-G-H-G-G-Q. A compositionally biased stretch (gly residues) spans His22–His32. Residues His22–Tyr85 are disordered. Over residues Gly63 to Tyr85 the composition is skewed to basic and acidic residues.

In terms of assembly, homodimer. The N-terminus is blocked. Hemolymph.

Functionally, this protein inhibits the growth of a variety of fungal species. The antifungal activity of this protein is enhanced by the presence of sarcotoxin IA. The protein is Antifungal protein of Sarcophaga peregrina (Flesh fly).